A 294-amino-acid chain; its full sequence is 1D-myo-inositol 2-acetamido-2-deoxy-alpha-D-glucopyranoside deacetylase (294 aa).

Residues His-13, Asp-16, and His-148 each contribute to the Zn(2+) site.

Belongs to the MshB deacetylase family. Zn(2+) is required as a cofactor.

It carries out the reaction 1D-myo-inositol 2-acetamido-2-deoxy-alpha-D-glucopyranoside + H2O = 1D-myo-inositol 2-amino-2-deoxy-alpha-D-glucopyranoside + acetate. Its function is as follows. Catalyzes the deacetylation of 1D-myo-inositol 2-acetamido-2-deoxy-alpha-D-glucopyranoside (GlcNAc-Ins) in the mycothiol biosynthesis pathway. This is 1D-myo-inositol 2-acetamido-2-deoxy-alpha-D-glucopyranoside deacetylase from Geodermatophilus obscurus (strain ATCC 25078 / DSM 43160 / JCM 3152 / CCUG 61914 / KCC A-0152 / KCTC 9177 / NBRC 13315 / NRRL B-3577 / G-20).